We begin with the raw amino-acid sequence, 225 residues long: UPF0758 protein Swoo_4561 (225 aa).

An MPN domain is found at 102–224 (ILSDPDLTRD…IVSFAERGWI (123 aa)). Residues histidine 173, histidine 175, and aspartate 186 each coordinate Zn(2+). The short motif at 173 to 186 (HNHPSGVAEPSHAD) is the JAMM motif element.

This sequence belongs to the UPF0758 family.

This is UPF0758 protein Swoo_4561 from Shewanella woodyi (strain ATCC 51908 / MS32).